The sequence spans 245 residues: Orotidine 5'-phosphate decarboxylase (245 aa).

Residues aspartate 22, lysine 44, 71–80 (DLKFHDIPNT), threonine 131, arginine 192, glutamine 201, glycine 221, and arginine 222 each bind substrate. Catalysis depends on lysine 73, which acts as the Proton donor.

It belongs to the OMP decarboxylase family. Type 1 subfamily. As to quaternary structure, homodimer.

The catalysed reaction is orotidine 5'-phosphate + H(+) = UMP + CO2. It functions in the pathway pyrimidine metabolism; UMP biosynthesis via de novo pathway; UMP from orotate: step 2/2. In terms of biological role, catalyzes the decarboxylation of orotidine 5'-monophosphate (OMP) to uridine 5'-monophosphate (UMP). This Escherichia coli O127:H6 (strain E2348/69 / EPEC) protein is Orotidine 5'-phosphate decarboxylase.